The primary structure comprises 240 residues: Large ribosomal subunit protein uL3 (240 aa).

Disordered regions lie at residues 138–158 (SISH…KTFK) and 215–240 (EAPL…SAEG). Gln-151 carries the post-translational modification N5-methylglutamine.

Belongs to the universal ribosomal protein uL3 family. Part of the 50S ribosomal subunit. Forms a cluster with proteins L14 and L19. In terms of processing, methylated by PrmB.

Its function is as follows. One of the primary rRNA binding proteins, it binds directly near the 3'-end of the 23S rRNA, where it nucleates assembly of the 50S subunit. The chain is Large ribosomal subunit protein uL3 from Beijerinckia indica subsp. indica (strain ATCC 9039 / DSM 1715 / NCIMB 8712).